Consider the following 605-residue polypeptide: Elongation factor 4 (605 aa).

Residues 11–193 (KNIRNFSIIA…TLVDVIPAPT (183 aa)) form the tr-type G domain. GTP is bound by residues 23-28 (DHGKST) and 140-143 (NKID).

This sequence belongs to the TRAFAC class translation factor GTPase superfamily. Classic translation factor GTPase family. LepA subfamily.

The protein localises to the cell inner membrane. It catalyses the reaction GTP + H2O = GDP + phosphate + H(+). Required for accurate and efficient protein synthesis under certain stress conditions. May act as a fidelity factor of the translation reaction, by catalyzing a one-codon backward translocation of tRNAs on improperly translocated ribosomes. Back-translocation proceeds from a post-translocation (POST) complex to a pre-translocation (PRE) complex, thus giving elongation factor G a second chance to translocate the tRNAs correctly. Binds to ribosomes in a GTP-dependent manner. The polypeptide is Elongation factor 4 (Acinetobacter baumannii (strain SDF)).